Here is a 452-residue protein sequence, read N- to C-terminus: Chromosomal replication initiator protein DnaA (452 aa).

A domain I, interacts with DnaA modulators region spans residues 1-85 (MSTTAWQKCL…IEVGSKPVEA (85 aa)). Residues 85–115 (AVDTPAETIVTSSSTAPLKSAPKKAVDYKSS) form a domain II region. The interval 116-332 (HLNKKFVFDS…GALRRVIANA (217 aa)) is domain III, AAA+ region. Gly160, Gly162, Lys163, and Thr164 together coordinate ATP. Residues 333–452 (HFTGKPITIE…YKNLMRILSS (120 aa)) are domain IV, binds dsDNA.

This sequence belongs to the DnaA family. In terms of assembly, oligomerizes as a right-handed, spiral filament on DNA at oriC.

Its subcellular location is the cytoplasm. In terms of biological role, plays an essential role in the initiation and regulation of chromosomal replication. ATP-DnaA binds to the origin of replication (oriC) to initiate formation of the DNA replication initiation complex once per cell cycle. Binds the DnaA box (a 9 base pair repeat at the origin) and separates the double-stranded (ds)DNA. Forms a right-handed helical filament on oriC DNA; dsDNA binds to the exterior of the filament while single-stranded (ss)DNA is stabiized in the filament's interior. The ATP-DnaA-oriC complex binds and stabilizes one strand of the AT-rich DNA unwinding element (DUE), permitting loading of DNA polymerase. After initiation quickly degrades to an ADP-DnaA complex that is not apt for DNA replication. Binds acidic phospholipids. This Legionella pneumophila (strain Paris) protein is Chromosomal replication initiator protein DnaA.